The following is a 534-amino-acid chain: Monolignol oxidoreductase AtBBE-like 13 (534 aa).

The signal sequence occupies residues 1–29 (MAFVLMNNTNAFLVTLLLLSLSYIPLSFS). 2 N-linked (GlcNAc...) asparagine glycosylation sites follow: N7 and N59. C38 and C102 are disulfide-bonded. A cross-link (6-(S-cysteinyl)-8alpha-(pros-histidyl)-FAD (His-Cys)) is located at residues 117 to 181 (HDYEGLSYVS…KIHGFPAGLC (65 aa)).

The protein belongs to the oxygen-dependent FAD-linked oxidoreductase family. Requires FAD as cofactor. The FAD cofactor is bound via a bicovalent 6-S-cysteinyl, 8alpha-N1-histidyl FAD linkage.

It is found in the secreted. Its subcellular location is the cell wall. It catalyses the reaction (E)-4-coumaroyl alcohol + A = (E)-4-coumaraldehyde + AH2. The catalysed reaction is (E)-coniferol + A = (E)-coniferaldehyde + AH2. The enzyme catalyses (E)-sinapyl alcohol + A = (E)-sinapaldehyde + AH2. Its pathway is phenylpropanoid metabolism. Its function is as follows. Mediates oxidation of p-hydroxylated derivatives of cinnamyl alcohol (i.e. the monolignols p-coumaryl-, coniferyl-, and sinapyl alcohol) to their corresponding aldehydes. The electron acceptor required for these reactions is not known, but does not seem to be dioxygen. Is much less efficient towards cinnamyl alcohol. This is Monolignol oxidoreductase AtBBE-like 13 from Arabidopsis thaliana (Mouse-ear cress).